Reading from the N-terminus, the 110-residue chain is Guanine nucleotide-binding protein subunit gamma (110 aa).

Residue cysteine 106 is the site of S-palmitoyl cysteine attachment. Cysteine 107 carries the cysteine methyl ester modification. Cysteine 107 is lipidated: S-farnesyl cysteine. Positions 108–110 are cleaved as a propeptide — removed in mature form; that stretch reads TLM.

Belongs to the G protein gamma family. As to quaternary structure, g proteins are composed of 3 units, alpha, beta and gamma. The beta-gamma subunit complex (STE4-STE18 complex) interacts with PLP1 and PLP2.

The protein localises to the membrane. In terms of biological role, implicated in the pheromone A- and alpha-factor response pathway. The beta and gamma chains of the putative yeast mating response pathway G protein play a positive role in initiation of the mating response. The chain is Guanine nucleotide-binding protein subunit gamma (STE18) from Saccharomyces cerevisiae (strain ATCC 204508 / S288c) (Baker's yeast).